Here is a 594-residue protein sequence, read N- to C-terminus: RING finger protein 207 (594 aa).

The RING-type zinc finger occupies 25–64 (CPLCHAQYERPCLLDCFHDFCAGCLRGRTADGRVACPLCQ). The B box-type; atypical zinc finger occupies 93–145 (VEAVHCANCDLDCSKQDAETACFCNTCGQPLCARCRDETHRARMFARHDIVAL). Zn(2+) contacts are provided by Cys98, Cys101, Cys127, and His132. The interval 369-400 (NTLAGGSGPKVLMGPSCPSPVRKVSRSPVQKP) is disordered. A coiled-coil region spans residues 424 to 458 (CRHYEDSYRGLQAEVQNLKDQVQELHRDLTKHHSL). The interval 552 to 594 (FQASADDESENPQTAYDASRNGETPASLLLPGSVASAEPPFVN) is disordered. Polar residues predominate over residues 562–575 (NPQTAYDASRNGET).

As to quaternary structure, interacts with the core-glycosylated, but not the fully glycosylated form of KCNH2/HERG. Interacts with DNAJA1 and HSPA8. Interacts (via the C-terminus) with HSPA1A; this interaction additively increases KCNH2 expression.

Its subcellular location is the cytoplasm. In terms of biological role, plays a role in cardiac repolarization possibly by stabilizing membrane expression of the potassium channel KCNH2/HERG, or by assisting its synthesis, folding or export from the endoplasmic reticulum, in a heat shock protein-dependent manner. The sequence is that of RING finger protein 207 (RNF207) from Oryctolagus cuniculus (Rabbit).